A 715-amino-acid chain; its full sequence is Protein Hook homolog 1 (715 aa).

A Calponin-homology (CH) domain is found at 6–122 (TVLCESLIIW…RLLQLILGCA (117 aa)). Coiled-coil stretches lie at residues 167–434 (AGDT…DQLL) and 463–656 (IRLQ…EEKL).

Belongs to the hook family. In terms of assembly, interacts with microtubules.

It localises to the cytoplasm. The protein localises to the cytoskeleton. Functionally, may function to promote vesicle trafficking and/or fusion. This chain is Protein Hook homolog 1 (hook1), found in Danio rerio (Zebrafish).